We begin with the raw amino-acid sequence, 57 residues long: UPF0391 membrane protein BRADO5617 (57 aa).

2 consecutive transmembrane segments (helical) span residues 1-21 and 30-50; these read MLGWVVTFLVIALIAGILGFG and IAKIIFFIAIVLFLVSAVVGL.

The protein belongs to the UPF0391 family.

Its subcellular location is the cell membrane. The polypeptide is UPF0391 membrane protein BRADO5617 (Bradyrhizobium sp. (strain ORS 278)).